Here is a 186-residue protein sequence, read N- to C-terminus: Peptidyl-tRNA hydrolase (186 aa).

Tyr14 provides a ligand contact to tRNA. The active-site Proton acceptor is the His19. TRNA-binding residues include Phe64, Asn66, and Asn112.

The protein belongs to the PTH family. In terms of assembly, monomer.

It localises to the cytoplasm. The catalysed reaction is an N-acyl-L-alpha-aminoacyl-tRNA + H2O = an N-acyl-L-amino acid + a tRNA + H(+). Hydrolyzes ribosome-free peptidyl-tRNAs (with 1 or more amino acids incorporated), which drop off the ribosome during protein synthesis, or as a result of ribosome stalling. Its function is as follows. Catalyzes the release of premature peptidyl moieties from peptidyl-tRNA molecules trapped in stalled 50S ribosomal subunits, and thus maintains levels of free tRNAs and 50S ribosomes. The chain is Peptidyl-tRNA hydrolase from Listeria monocytogenes serotype 4b (strain CLIP80459).